The chain runs to 404 residues: 5-azacytidine-induced protein 2 (404 aa).

The interval 1-198 is homodimerization; sequence MDTLVEDDIC…TELQKARQTG (198 aa). Residues 40 to 198 are a coiled coil; sequence ALVTAYEDIK…TELQKARQTG (159 aa). Residues 229–269 are interaction with TBK1 and IKBKE; that stretch reads SDHMQHAYWELRREMANLHLVTRVQAELLRQLKTAAAGKAC. Ser-330 carries the post-translational modification Phosphoserine. Disordered regions lie at residues 332 to 351 and 356 to 390; these read TDNERLTPNDGADFQEHNSY and LEDNSWVFPSPPKSSETAFGESKSKILPSPNLPPL. Ser-365 carries the phosphoserine modification.

In terms of assembly, homodimer. Interacts with IKBKE, TBK1 and TICAM1. Interacts with TAX1BP1. Interacts with CALCOCO2. In terms of processing, ubiquitinated via 'Lys-48'-linked polyubiquitination by TRIM38, leading to its degradation.

Its subcellular location is the cytoplasm. Functionally, adapter protein which binds TBK1 and IKBKE playing a role in antiviral innate immunity. Activates serine/threonine-protein kinase TBK1 and facilitates its oligomerization. Enhances the phosphorylation of NF-kappa-B p65 subunit RELA by TBK1. Promotes TBK1-induced as well as TNF-alpha or PMA-induced activation of NF-kappa-B. Participates in IFNB promoter activation via TICAM1. The protein is 5-azacytidine-induced protein 2 (Azi2) of Rattus norvegicus (Rat).